The primary structure comprises 430 residues: UDP-N-acetylglucosamine 1-carboxyvinyltransferase 1 (430 aa).

Position 22 to 23 (22 to 23) interacts with phosphoenolpyruvate; that stretch reads KN. Residue arginine 93 coordinates UDP-N-acetyl-alpha-D-glucosamine. Cysteine 117 functions as the Proton donor in the catalytic mechanism. At cysteine 117 the chain carries 2-(S-cysteinyl)pyruvic acid O-phosphothioketal. UDP-N-acetyl-alpha-D-glucosamine contacts are provided by residues 122–126, aspartate 305, and valine 327; that span reads RPVDL.

The protein belongs to the EPSP synthase family. MurA subfamily.

The protein localises to the cytoplasm. It catalyses the reaction phosphoenolpyruvate + UDP-N-acetyl-alpha-D-glucosamine = UDP-N-acetyl-3-O-(1-carboxyvinyl)-alpha-D-glucosamine + phosphate. It participates in cell wall biogenesis; peptidoglycan biosynthesis. In terms of biological role, cell wall formation. Adds enolpyruvyl to UDP-N-acetylglucosamine. In Listeria monocytogenes serotype 4b (strain F2365), this protein is UDP-N-acetylglucosamine 1-carboxyvinyltransferase 1.